The primary structure comprises 994 residues: Probable beta-galactosidase C (994 aa).

Positions 1–19 (MKLQSILSCWAILVAQIWA) are cleaved as a signal peptide. Tyr78 contributes to the substrate binding site. Asn88 carries N-linked (GlcNAc...) asparagine glycosylation. The substrate site is built by Asn123, Ala124, Glu125, and Asn183. Glu184 (proton donor) is an active-site residue. Tyr247 contacts substrate. Cys253 and Cys301 are joined by a disulfide. Asn272 carries an N-linked (GlcNAc...) asparagine glycan. The Nucleophile role is filled by Glu283. Tyr350 serves as a coordination point for substrate. N-linked (GlcNAc...) asparagine glycans are attached at residues Asn388, Asn407, Asn433, Asn500, Asn514, Asn521, Asn584, Asn600, Asn674, Asn712, Asn717, Asn757, Asn861, and Asn969.

It belongs to the glycosyl hydrolase 35 family.

The protein localises to the secreted. It catalyses the reaction Hydrolysis of terminal non-reducing beta-D-galactose residues in beta-D-galactosides.. Its function is as follows. Cleaves beta-linked terminal galactosyl residues from gangliosides, glycoproteins, and glycosaminoglycans. The polypeptide is Probable beta-galactosidase C (lacC) (Aspergillus niger (strain ATCC MYA-4892 / CBS 513.88 / FGSC A1513)).